A 952-amino-acid chain; its full sequence is Protein translocase subunit SecA (952 aa).

ATP contacts are provided by residues glutamine 104, 122–126 (GEGKT), and aspartate 512.

This sequence belongs to the SecA family. In terms of assembly, monomer and homodimer. Part of the essential Sec protein translocation apparatus which comprises SecA, SecYEG and auxiliary proteins SecDF. Other proteins may also be involved.

The protein localises to the cell inner membrane. The protein resides in the cytoplasm. It catalyses the reaction ATP + H2O + cellular proteinSide 1 = ADP + phosphate + cellular proteinSide 2.. Its function is as follows. Part of the Sec protein translocase complex. Interacts with the SecYEG preprotein conducting channel. Has a central role in coupling the hydrolysis of ATP to the transfer of proteins into and across the cell membrane, serving as an ATP-driven molecular motor driving the stepwise translocation of polypeptide chains across the membrane. This is Protein translocase subunit SecA from Gloeobacter violaceus (strain ATCC 29082 / PCC 7421).